A 230-amino-acid polypeptide reads, in one-letter code: Probable thioesterase YBR096W (230 aa).

Belongs to the lcsJ thioesterase family.

This chain is Probable thioesterase YBR096W, found in Saccharomyces cerevisiae (strain ATCC 204508 / S288c) (Baker's yeast).